The sequence spans 89 residues: Small ribosomal subunit protein uS15 (89 aa).

The protein belongs to the universal ribosomal protein uS15 family. Part of the 30S ribosomal subunit. Forms a bridge to the 50S subunit in the 70S ribosome, contacting the 23S rRNA.

Functionally, one of the primary rRNA binding proteins, it binds directly to 16S rRNA where it helps nucleate assembly of the platform of the 30S subunit by binding and bridging several RNA helices of the 16S rRNA. Forms an intersubunit bridge (bridge B4) with the 23S rRNA of the 50S subunit in the ribosome. This is Small ribosomal subunit protein uS15 from Paenarthrobacter aurescens (strain TC1).